Consider the following 306-residue polypeptide: MVEPMNWISEVVRPRIKTLFKRETPENLWIKCPDTGQMVFHKEVEQNHWVIPGSEHHLKMSAAARLKMMFDEGTWIDVPLPEVPADPLKFRDEKRYADRLKEARAKTGMPDAFKIGFGRVGGLPMTIAAQEFGFMAGSLGMAGGEAFVRGAETALEKRTPYVLFAASGGARMQEGILSLMQMPRTTVAVRRLRAARLPYIVVLTNPTTGGVTASYAMLGDVHLAEPGALICFAGPRVIEQTIREKLPDGFQRAEYLREHGMVDQVVHRHQLKETITRLCGLLMDVRQTPAGKPSTPVAPEPVPDAA.

A CoA carboxyltransferase N-terminal domain is found at 28–297 (LWIKCPDTGQ…TPAGKPSTPV (270 aa)). A disordered region spans residues 287 to 306 (QTPAGKPSTPVAPEPVPDAA). Residues 296–306 (PVAPEPVPDAA) are compositionally biased toward pro residues.

It belongs to the AccD/PCCB family. As to quaternary structure, acetyl-CoA carboxylase is a heterohexamer composed of biotin carboxyl carrier protein (AccB), biotin carboxylase (AccC) and two subunits each of ACCase subunit alpha (AccA) and ACCase subunit beta (AccD).

The protein localises to the cytoplasm. The catalysed reaction is N(6)-carboxybiotinyl-L-lysyl-[protein] + acetyl-CoA = N(6)-biotinyl-L-lysyl-[protein] + malonyl-CoA. The protein operates within lipid metabolism; malonyl-CoA biosynthesis; malonyl-CoA from acetyl-CoA: step 1/1. In terms of biological role, component of the acetyl coenzyme A carboxylase (ACC) complex. Biotin carboxylase (BC) catalyzes the carboxylation of biotin on its carrier protein (BCCP) and then the CO(2) group is transferred by the transcarboxylase to acetyl-CoA to form malonyl-CoA. The sequence is that of Acetyl-coenzyme A carboxylase carboxyl transferase subunit beta from Methylorubrum populi (strain ATCC BAA-705 / NCIMB 13946 / BJ001) (Methylobacterium populi).